Reading from the N-terminus, the 55-residue chain is Protein CADMIUM TOLERANCE 1 (55 aa).

A helical membrane pass occupies residues 24-40 (GCLYACIFTALCCFCCY).

It belongs to the CYSTM1 family.

Its subcellular location is the cell membrane. It localises to the secreted. It is found in the cell wall. Functionally, confers resistance to heavy metal ions (e.g. cadmium (CdCl(2)) and copper (CuCl(2))) by chelating them at the plasma membrane of root cells, thus stopping their entry and reducing their accumulation. The sequence is that of Protein CADMIUM TOLERANCE 1 from Echinochloa crus-galli subsp. caudata (Cockspur).